Here is a 345-residue protein sequence, read N- to C-terminus: Gibberellin receptor GID1A (345 aa).

Position 2 is an N-acetylalanine (A2). The Involved in the stabilization of the negatively charged intermediate by the formation of the oxyanion hole signature appears at 113 to 115; sequence HGG. Residues 115-116, Y127, and S191 each bind gibberellin A4; that span reads GS. 4 residues coordinate gibberellin A3: S116, Y127, S191, and F238. S191 is a catalytic residue. Residue D289 is part of the active site. G320 provides a ligand contact to gibberellin A4. G320 lines the gibberellin A3 pocket.

The protein belongs to the 'GDXG' lipolytic enzyme family. Interacts (via N-terminus) with the DELLA proteins GAI, RGA, RGL1, RGL2 and RGL3 (via N-terminus) in a GA-dependent manner. As to expression, widely expressed.

The protein localises to the nucleus. Functions as a soluble gibberellin (GA) receptor. GA is an essential hormone that regulates growth and development in plants. Binds with high affinity the biologically active gibberellin GA4, but has no affinity for the biologically inactive GAs. In response to GA, interacts with specific DELLA proteins, known as repressors of GA-induced growth, and targets them for degradation via proteasome. Seems to be required for GA signaling that controls root growth, seed germination, stem elongation and flower development. Partially redundant with GID1B and GID1C. The sequence is that of Gibberellin receptor GID1A (GID1A) from Arabidopsis thaliana (Mouse-ear cress).